The chain runs to 1533 residues: Glycogen debranching enzyme (1533 aa).

At Ser64 the chain carries Phosphoserine. Residues Asp527, His530, and Asp628 contribute to the active site.

It belongs to the glycogen debranching enzyme family. In terms of assembly, monomer. Interacts with NHLRC1/malin. Post-translationally, ubiquitinated.

It is found in the cytoplasm. It carries out the reaction Transfers a segment of a (1-&gt;4)-alpha-D-glucan to a new position in an acceptor, which may be glucose or a (1-&gt;4)-alpha-D-glucan.. The catalysed reaction is Hydrolysis of (1-&gt;6)-alpha-D-glucosidic branch linkages in glycogen phosphorylase limit dextrin.. Multifunctional enzyme acting as 1,4-alpha-D-glucan:1,4-alpha-D-glucan 4-alpha-D-glycosyltransferase and amylo-1,6-glucosidase in glycogen degradation. This is Glycogen debranching enzyme (AGL) from Canis lupus familiaris (Dog).